The sequence spans 279 residues: Ribosomal RNA small subunit methyltransferase A (279 aa).

Residues N25, L27, G52, E73, D98, and N120 each contribute to the S-adenosyl-L-methionine site.

It belongs to the class I-like SAM-binding methyltransferase superfamily. rRNA adenine N(6)-methyltransferase family. RsmA subfamily.

It localises to the cytoplasm. It catalyses the reaction adenosine(1518)/adenosine(1519) in 16S rRNA + 4 S-adenosyl-L-methionine = N(6)-dimethyladenosine(1518)/N(6)-dimethyladenosine(1519) in 16S rRNA + 4 S-adenosyl-L-homocysteine + 4 H(+). In terms of biological role, specifically dimethylates two adjacent adenosines (A1518 and A1519) in the loop of a conserved hairpin near the 3'-end of 16S rRNA in the 30S particle. May play a critical role in biogenesis of 30S subunits. This chain is Ribosomal RNA small subunit methyltransferase A, found in Magnetococcus marinus (strain ATCC BAA-1437 / JCM 17883 / MC-1).